Consider the following 296-residue polypeptide: Formylmethanofuran--tetrahydromethanopterin formyltransferase (296 aa).

The protein belongs to the FTR family. As to quaternary structure, homotetramer composed of two dimers. Dimerization is sufficient for enzyme activity, but tetramerization is required for high thermostability.

It localises to the cytoplasm. It carries out the reaction N-formylmethanofuran + 5,6,7,8-tetrahydromethanopterin + H(+) = N(5)-formyl-5,6,7,8-tetrahydromethanopterin + methanofuran. It participates in one-carbon metabolism; methanogenesis from CO(2); 5,10-methenyl-5,6,7,8-tetrahydromethanopterin from CO(2): step 2/3. Its activity is regulated as follows. Requires high salt concentrations for activity and thermostability; 1.5-1.8 M KH(2)PO(4) stimulates activity while stabilizing the enzyme. Its function is as follows. Catalyzes the reversible transfer of a formyl group from formylmethanofuran (formyl-MFR) to tetrahydromethanopterin (H(4)MPT) to produce 5-formyl tetrahydromethanopterin (5-formyl-H(4)MPT) and methanofuran (MFR). Acts via a ternary-complex mechanism. Uses N-furfurylformamide much less efficiently, does not use N-methylformamide or formamide. Protein overexpressed in E.coli has very similar properties to enzyme purified from M.kandleri. The chain is Formylmethanofuran--tetrahydromethanopterin formyltransferase from Methanopyrus kandleri (strain AV19 / DSM 6324 / JCM 9639 / NBRC 100938).